A 122-amino-acid polypeptide reads, in one-letter code: uncharacterized protein (122 aa).

This is an uncharacterized protein from Bacillus subtilis (strain 168).